A 428-amino-acid chain; its full sequence is Serine--tRNA ligase (428 aa).

L-serine is bound at residue 231–233; the sequence is TSE. ATP contacts are provided by residues 262–264 and Val278; that span reads RRE. Glu285 serves as a coordination point for L-serine. 349-352 serves as a coordination point for ATP; it reads ELTS. Thr384 contributes to the L-serine binding site.

The protein belongs to the class-II aminoacyl-tRNA synthetase family. Type-1 seryl-tRNA synthetase subfamily. As to quaternary structure, homodimer. The tRNA molecule binds across the dimer.

The protein resides in the cytoplasm. It catalyses the reaction tRNA(Ser) + L-serine + ATP = L-seryl-tRNA(Ser) + AMP + diphosphate + H(+). It carries out the reaction tRNA(Sec) + L-serine + ATP = L-seryl-tRNA(Sec) + AMP + diphosphate + H(+). The protein operates within aminoacyl-tRNA biosynthesis; selenocysteinyl-tRNA(Sec) biosynthesis; L-seryl-tRNA(Sec) from L-serine and tRNA(Sec): step 1/1. In terms of biological role, catalyzes the attachment of serine to tRNA(Ser). Is also able to aminoacylate tRNA(Sec) with serine, to form the misacylated tRNA L-seryl-tRNA(Sec), which will be further converted into selenocysteinyl-tRNA(Sec). This chain is Serine--tRNA ligase, found in Bifidobacterium animalis subsp. lactis (strain AD011).